A 316-amino-acid chain; its full sequence is Small kinetochore-associated protein (316 aa).

S128 carries the phosphoserine modification. The tract at residues 159–316 (VRKGYKPLSK…LKEMEQLLEM (158 aa)) is interaction with SPAG5. 2 coiled-coil regions span residues 166 to 216 (LSKQ…FRDN) and 248 to 316 (SMLL…LLEM).

In terms of assembly, part of an astrin (SPAG5)-kinastrin (SKAP) complex containing KNSTRN, SPAG5, PLK1, DYNLL1 and SGO2. Interacts with SPAG5. Directly binds to microtubules, although at relatively low affinity. Interacts with CENPE; this interaction greatly favors microtubule-binding. Interacts with DSN1/MIS13; leading to localization to kinetochores. Interacts with MAPRE1/EB1; leading to localization to the microtubule plus ends. Interacts with PRPF19. Interacts with DYNLL1. Interacts with MAP4. As to expression, widely expressed, including in skin.

It localises to the nucleus. The protein localises to the chromosome. Its subcellular location is the centromere. The protein resides in the kinetochore. It is found in the cytoplasm. It localises to the cytoskeleton. The protein localises to the spindle pole. Its subcellular location is the microtubule organizing center. In terms of biological role, essential component of the mitotic spindle required for faithful chromosome segregation and progression into anaphase. Promotes the metaphase-to-anaphase transition and is required for chromosome alignment, normal timing of sister chromatid segregation, and maintenance of spindle pole architecture. The astrin (SPAG5)-kinastrin (SKAP) complex promotes stable microtubule-kinetochore attachments. Required for kinetochore oscillations and dynamics of microtubule plus-ends during live cell mitosis, possibly by forming a link between spindle microtubule plus-ends and mitotic chromosomes to achieve faithful cell division. May be involved in UV-induced apoptosis via its interaction with PRPF19; however, these results need additional evidences. This Homo sapiens (Human) protein is Small kinetochore-associated protein.